We begin with the raw amino-acid sequence, 310 residues long: tRNA dimethylallyltransferase (310 aa).

Residue glycine 9–threonine 16 coordinates ATP. Threonine 11 to threonine 16 is a binding site for substrate. The interaction with substrate tRNA stretch occupies residues aspartate 34–glutamine 37.

The protein belongs to the IPP transferase family. In terms of assembly, monomer. Mg(2+) serves as cofactor.

The enzyme catalyses adenosine(37) in tRNA + dimethylallyl diphosphate = N(6)-dimethylallyladenosine(37) in tRNA + diphosphate. Its function is as follows. Catalyzes the transfer of a dimethylallyl group onto the adenine at position 37 in tRNAs that read codons beginning with uridine, leading to the formation of N6-(dimethylallyl)adenosine (i(6)A). The sequence is that of tRNA dimethylallyltransferase from Pediococcus pentosaceus (strain ATCC 25745 / CCUG 21536 / LMG 10740 / 183-1w).